The following is a 201-amino-acid chain: Large ribosomal subunit protein uL4 (201 aa).

The tract at residues 43–69 (TKAQKGRSDVSGGGAKPWKQKGSGRAR) is disordered.

It belongs to the universal ribosomal protein uL4 family. As to quaternary structure, part of the 50S ribosomal subunit.

Its function is as follows. One of the primary rRNA binding proteins, this protein initially binds near the 5'-end of the 23S rRNA. It is important during the early stages of 50S assembly. It makes multiple contacts with different domains of the 23S rRNA in the assembled 50S subunit and ribosome. Functionally, forms part of the polypeptide exit tunnel. The chain is Large ribosomal subunit protein uL4 from Thioalkalivibrio sulfidiphilus (strain HL-EbGR7).